The primary structure comprises 392 residues: Formate-dependent phosphoribosylglycinamide formyltransferase (392 aa).

Residues 22–23 (EL) and glutamate 82 each bind N(1)-(5-phospho-beta-D-ribosyl)glycinamide. ATP is bound by residues arginine 114, lysine 155, 160–165 (SSGKGQ), 195–198 (EGVV), and glutamate 203. One can recognise an ATP-grasp domain in the interval 119–308 (RLAAEELGLP…EFALHVRAFL (190 aa)). The Mg(2+) site is built by glutamate 267 and glutamate 279. Residues aspartate 286, lysine 355, and 362 to 363 (RR) contribute to the N(1)-(5-phospho-beta-D-ribosyl)glycinamide site.

This sequence belongs to the PurK/PurT family. In terms of assembly, homodimer.

It carries out the reaction N(1)-(5-phospho-beta-D-ribosyl)glycinamide + formate + ATP = N(2)-formyl-N(1)-(5-phospho-beta-D-ribosyl)glycinamide + ADP + phosphate + H(+). Its pathway is purine metabolism; IMP biosynthesis via de novo pathway; N(2)-formyl-N(1)-(5-phospho-D-ribosyl)glycinamide from N(1)-(5-phospho-D-ribosyl)glycinamide (formate route): step 1/1. In terms of biological role, involved in the de novo purine biosynthesis. Catalyzes the transfer of formate to 5-phospho-ribosyl-glycinamide (GAR), producing 5-phospho-ribosyl-N-formylglycinamide (FGAR). Formate is provided by PurU via hydrolysis of 10-formyl-tetrahydrofolate. This chain is Formate-dependent phosphoribosylglycinamide formyltransferase, found in Salmonella paratyphi B (strain ATCC BAA-1250 / SPB7).